The sequence spans 792 residues: Type 2 topoisomerase subunit B (792 aa).

The Toprim domain occupies 423–537; it reads CEIFLVEGDS…EGYVYIAEPP (115 aa). Mg(2+)-binding residues include Glu429, Asp502, and Asp504.

It belongs to the type II topoisomerase GyrB family. Heterotetramer, composed of two GyrA and two GyrB chains. In the heterotetramer, 'GyrA' contains the active site tyrosine that forms a transient covalent intermediate with DNA, while 'GyrB' binds cofactors and catalyzes ATP hydrolysis. Mg(2+) is required as a cofactor. Requires Mn(2+) as cofactor. It depends on Ca(2+) as a cofactor.

Its subcellular location is the cytoplasm. It catalyses the reaction ATP-dependent breakage, passage and rejoining of double-stranded DNA.. Functionally, a type II topoisomerase. Despite its similarity to DNA gyrase, this enzyme is not able to supercoil DNA, and instead acts like topoisomerase IV. Relaxes both positively and negatively supercoiled DNA in an ATP-dependent fashion, decatenates interlocked circles. If this subunit is reconstituted with GyrA from E.coli the hybrid enzyme supercoils relaxed plasmid DNA; if paired with E.coli ParC supercoiling is not restored. This the first bacteria shown to not contain DNA gyrase, although it has 2 copies of a reverse gyrase that introduces positive supercoils. Type II topoisomerases break and join 2 DNA strands simultaneously in an ATP-dependent manner. The sequence is that of Type 2 topoisomerase subunit B from Aquifex aeolicus (strain VF5).